A 151-amino-acid polypeptide reads, in one-letter code: Transcriptional repressor NrdR (151 aa).

The segment at 3 to 34 (CPYCAYGESKVVDSRSTEDGSSIRRRRECLKC) is a zinc-finger region. One can recognise an ATP-cone domain in the interval 49–139 (ILVIKKNMSR…VYRQFKDINT (91 aa)).

This sequence belongs to the NrdR family. Zn(2+) is required as a cofactor.

Negatively regulates transcription of bacterial ribonucleotide reductase nrd genes and operons by binding to NrdR-boxes. The polypeptide is Transcriptional repressor NrdR (Clostridium botulinum (strain Loch Maree / Type A3)).